A 183-amino-acid chain; its full sequence is UPF0134 protein MPN_100 (183 aa).

The protein belongs to the UPF0134 family.

The sequence is that of UPF0134 protein MPN_100 from Mycoplasma pneumoniae (strain ATCC 29342 / M129 / Subtype 1) (Mycoplasmoides pneumoniae).